A 482-amino-acid polypeptide reads, in one-letter code: Chitobiosyldiphosphodolichol beta-mannosyltransferase (482 aa).

Residues 1 to 2 are Lumenal-facing; sequence MA. A helical transmembrane segment spans residues 3–23; that stretch reads ASCVALLVLALLLLVLLLGLW. Over 24 to 99 the chain is Cytoplasmic; the sequence is KRGRQTGRAR…DLRGLGAGPR (76 aa). The helical intramembrane region spans 100 to 120; that stretch reads ILQYGVKVVFQAVYLLWKMMR. Residues 121–482 lie on the Cytoplasmic side of the membrane; it reads MDPAAYIFLQ…PCGHPSCRGF (362 aa). S242 is modified (phosphoserine).

Belongs to the glycosyltransferase group 1 family. Glycosyltransferase 33 subfamily.

It localises to the endoplasmic reticulum membrane. It catalyses the reaction an N,N'-diacetylchitobiosyl-diphospho-di-trans,poly-cis-dolichol + GDP-alpha-D-mannose = a beta-D-Man-(1-&gt;4)-beta-D-GlcNAc-(1-&gt;4)-alpha-D-GlcNAc-diphospho-di-trans,poly-cis-dolichol + GDP + H(+). The protein operates within protein modification; protein glycosylation. Mannosyltransferase that operates in the biosynthetic pathway of dolichol-linked oligosaccharides, the glycan precursors employed in protein asparagine (N)-glycosylation. The assembly of dolichol-linked oligosaccharides begins on the cytosolic side of the endoplasmic reticulum membrane and finishes in its lumen. The sequential addition of sugars to dolichol pyrophosphate produces dolichol-linked oligosaccharides containing fourteen sugars, including two GlcNAcs, nine mannoses and three glucoses. Once assembled, the oligosaccharide is transferred from the lipid to nascent proteins by oligosaccharyltransferases. Catalyzes, on the cytoplasmic face of the endoplasmic reticulum, the addition of the first mannose residues to the dolichol-linked oligosaccharide chain, to produce Man1GlcNAc(2)-PP-dolichol core oligosaccharide. Man1GlcNAc(2)-PP-dolichol is a substrate for ALG2, the following enzyme in the biosynthetic pathway. This Mus musculus (Mouse) protein is Chitobiosyldiphosphodolichol beta-mannosyltransferase.